A 118-amino-acid chain; its full sequence is Na(+)/H(+) antiporter subunit G1 (118 aa).

3 helical membrane-spanning segments follow: residues L9–I29, L47–I67, and M69–I89.

The protein belongs to the CPA3 antiporters (TC 2.A.63) subunit G family. As to quaternary structure, may form a heterooligomeric complex that consists of seven subunits: mnhA1, mnhB1, mnhC1, mnhD1, mnhE1, mnhF1 and mnhG1.

The protein localises to the cell membrane. In terms of biological role, mnh complex is a Na(+)/H(+) antiporter involved in Na(+) excretion. This chain is Na(+)/H(+) antiporter subunit G1 (mnhG1), found in Staphylococcus haemolyticus (strain JCSC1435).